The chain runs to 340 residues: Probable dual-specificity RNA methyltransferase RlmN (340 aa).

The active-site Proton acceptor is glutamate 93. The Radical SAM core domain maps to 99–327 (TAKRLTVCVS…VSVRYSRGLE (229 aa)). Cysteine 106 and cysteine 332 are joined by a disulfide. [4Fe-4S] cluster-binding residues include cysteine 113, cysteine 117, and cysteine 120. Residues 160-161 (GE), serine 190, 213-215 (SLH), and asparagine 289 each bind S-adenosyl-L-methionine. The active-site S-methylcysteine intermediate is the cysteine 332.

Belongs to the radical SAM superfamily. RlmN family. [4Fe-4S] cluster serves as cofactor.

The protein resides in the cytoplasm. It carries out the reaction adenosine(2503) in 23S rRNA + 2 reduced [2Fe-2S]-[ferredoxin] + 2 S-adenosyl-L-methionine = 2-methyladenosine(2503) in 23S rRNA + 5'-deoxyadenosine + L-methionine + 2 oxidized [2Fe-2S]-[ferredoxin] + S-adenosyl-L-homocysteine. It catalyses the reaction adenosine(37) in tRNA + 2 reduced [2Fe-2S]-[ferredoxin] + 2 S-adenosyl-L-methionine = 2-methyladenosine(37) in tRNA + 5'-deoxyadenosine + L-methionine + 2 oxidized [2Fe-2S]-[ferredoxin] + S-adenosyl-L-homocysteine. Specifically methylates position 2 of adenine 2503 in 23S rRNA and position 2 of adenine 37 in tRNAs. This Rippkaea orientalis (strain PCC 8801 / RF-1) (Cyanothece sp. (strain PCC 8801)) protein is Probable dual-specificity RNA methyltransferase RlmN.